A 751-amino-acid polypeptide reads, in one-letter code: Trehalose phosphorylase (751 aa).

A propeptide spanning residues 1 to 26 is cleaved from the precursor; it reads MSTPHHQFESKSSTAIRRRLSSSVSS. The interval 1–28 is disordered; that stretch reads MSTPHHQFESKSSTAIRRRLSSSVSSKQ.

Belongs to the glycosyltransferase group 1 family. Glycosyltransferase 4 subfamily. As to quaternary structure, homodimer. Expressed in mycelia, stipes and pilei.

The enzyme catalyses alpha,alpha-trehalose + phosphate = alpha-D-glucose + alpha-D-glucose 1-phosphate. In terms of biological role, reversibly catalyzes the synthesis and degradation of trehalose from glucose and alpha-D-glucose 1-phosphate. The equilibrium lies in the direction of trehalose synthesis. The protein is Trehalose phosphorylase of Pleurotus sajor-caju (Oyster mushroom).